Here is a 531-residue protein sequence, read N- to C-terminus: MIFDTEEFKKRGKEDFESAWHAGPSVLTPPTTDLMYPRLTYLRAQAHPVFETIHRLREAYLAIGFQEAENPIIVDEQEVYRQFGPEAMAVLDRVFYLGGLPRPNVGIGKEQIQKINSILGRDLSEDEEESLRKTLHAYKKSEIDGDELAYELSGVLHTDDARIVEILDRVFPEFRALKPESSRQTLRSHMTSGWFQTLGAIWEKVPHPIRLFSIDRCFRREQAEDSHRLMSYHSASCVVAGEYVTIEDGKAVARALLSAFGYTDFEFRPDDKRSKYYMPDTQTEVYAAHPDHGWVEVATFGIYSPVALAEYGVGIPVMNLGLGVERMAMIMNKAKDVRELCFPQFFPIRYTDTELAAGVSLLAEPATTPGKNLVRSLINTAVTHSTAIGPCSFVAFEGEIAGKQIRVYVEEPEENAKLLGPACMNEIFVHKGAILGVPDTEKFAEVRKNGISTGISYLFAAASQAAAEIEQAAHFGIPTTVQIKMARLPGDINLKIEPWVMRYITDNNLKTDVRGPVFLTIRSEVLPTSEV.

Residues 189–191 (HMT), 234–236 (SAS), 276–277 (YY), and N319 contribute to the substrate site.

It belongs to the class-II aminoacyl-tRNA synthetase family. O-phosphoseryl-tRNA(Cys) synthetase subfamily. Homotetramer. Interacts with SepCysS.

The catalysed reaction is tRNA(Cys) + O-phospho-L-serine + ATP = O-phospho-L-seryl-tRNA(Cys) + AMP + diphosphate. Its function is as follows. Catalyzes the attachment of O-phosphoserine (Sep) to tRNA(Cys). In Methanospirillum hungatei JF-1 (strain ATCC 27890 / DSM 864 / NBRC 100397 / JF-1), this protein is O-phosphoserine--tRNA(Cys) ligase.